An 876-amino-acid chain; its full sequence is Extended synaptotagmin-2-B (876 aa).

Positions 1–21 (MASESGAEKGPPTTPAENGQP) are disordered. The Cytoplasmic portion of the chain corresponds to 1–35 (MASESGAEKGPPTTPAENGQPGVPIAAAVAADEQG). A helical transmembrane segment spans residues 36–56 (MISVDIAGLFYQFSKTFILIF). The Lumenal portion of the chain corresponds to 57 to 59 (PVY). Residues 60–80 (VLGYFGLSFSWLLIALVLLLW) form a helical membrane-spanning segment. Residues 81–876 (WRRNKGNKNS…EDGTRAAASS (796 aa)) lie on the Cytoplasmic side of the membrane. In terms of domain architecture, SMP-LTD spans 123 to 302 (DIERAEWLNK…LPNRITVPLV (180 aa)). C2 domains lie at 301 to 421 (LVSD…DEWF) and 446 to 592 (NLDQ…HLNN). Ca(2+) is bound by residues K332, D333, D345, D392, E393, D394, D396, D398, and D399. The tract at residues 614–714 (VRSPDEQHTS…KEPTPSIASD (101 aa)) is disordered. Residues 636 to 656 (PPTPQMPAPSPAVAHKPPPTP) show a composition bias toward pro residues. Positions 686–698 (SSSSLSGSSFTYS) are enriched in low complexity. One can recognise a C2 3 domain in the interval 741 to 863 (PLGQIQLTIR…DAAKGWTQWF (123 aa)). The required for phosphatidylinositol 4,5-bisphosphate-dependent location at the cell membrane stretch occupies residues 788–795 (KRRSGRRK).

It belongs to the extended synaptotagmin family. As to quaternary structure, interacts with fgfr1 that has been activated by fgf1 binding. Interacts (via C2 domains) with the AP-2 complex (via an alpha subunit). Identified in a complex with the AP-2 complex and fgfr1.

It is found in the cell membrane. It localises to the endoplasmic reticulum membrane. Functionally, tethers the endoplasmic reticulum to the cell membrane and promotes the formation of appositions between the endoplasmic reticulum and the cell membrane. Binds glycerophospholipids in a barrel-like domain and may play a role in cellular lipid transport. Plays a role in the rapid internalization of fgfr1 that has been activated by fgf1 binding; this occurs most likely via the AP-2 complex. Required for normal fgf signaling and the activation of downstream signaling cascades via its role in the internalization of activated fgfr1. Required for normal embryonic development via its role in fgf signaling and the downstream regulation of t/xBRA expression. The polypeptide is Extended synaptotagmin-2-B (esyt2-b) (Xenopus laevis (African clawed frog)).